The sequence spans 147 residues: Hemoglobin subunit epsilon (147 aa).

A Globin domain is found at 3 to 147 (HFTAEEKTAI…VASALAHKYH (145 aa)). A phosphoserine mark is found at Ser-14 and Ser-51. 2 residues coordinate heme b: His-64 and His-93.

Belongs to the globin family. In terms of tissue distribution, red blood cells.

Its function is as follows. Hemoglobin epsilon chain is an embryonic-type beta-type chain found in prenatal and neonatal marsupials. The polypeptide is Hemoglobin subunit epsilon (HBE1) (Notamacropus eugenii (Tammar wallaby)).